Reading from the N-terminus, the 129-residue chain is DNA-directed RNA polymerase subunit omega (129 aa).

Positions 76–100 (EVDEPEPEAVPMIASGDSSGGEDSD) are disordered.

It belongs to the RNA polymerase subunit omega family. In terms of assembly, the RNAP catalytic core consists of 2 alpha, 1 beta, 1 beta' and 1 omega subunit. When a sigma factor is associated with the core the holoenzyme is formed, which can initiate transcription.

The catalysed reaction is RNA(n) + a ribonucleoside 5'-triphosphate = RNA(n+1) + diphosphate. Functionally, promotes RNA polymerase assembly. Latches the N- and C-terminal regions of the beta' subunit thereby facilitating its interaction with the beta and alpha subunits. This Xanthobacter autotrophicus (strain ATCC BAA-1158 / Py2) protein is DNA-directed RNA polymerase subunit omega.